Reading from the N-terminus, the 214-residue chain is Small ribosomal subunit protein uS5 (214 aa).

Residues 54-117 (LRYDIVDIGI…RDAKMRIIPV (64 aa)) form the S5 DRBM domain.

It belongs to the universal ribosomal protein uS5 family. As to quaternary structure, part of the 30S ribosomal subunit. Contacts protein S4.

Functionally, with S4 and S12 plays an important role in translational accuracy. The sequence is that of Small ribosomal subunit protein uS5 from Sulfolobus acidocaldarius (strain ATCC 33909 / DSM 639 / JCM 8929 / NBRC 15157 / NCIMB 11770).